Here is a 360-residue protein sequence, read N- to C-terminus: MKASLLNKLDVLSDRFEELTALLGDAEVISDQTRFRAYSREYAEVEPVVALYKQLARVQGDLEGAQALLKDSDPDMREMAVEEVRETKQQLVELEAQLQRMLLPKDPNDGRNVFLEIRAGTGGDEAAIFSGDLFRMYSRYAERRGWRVEILSENEGEHGGYKEVIARVEGDSVYGKLKFESGAHRVQRVPKTESQGRIHTSACTVAVLPEPDEQQAIEINPADLRVDTYRSSGAGGQHVNKTDSAIRITHLPSGIVVECQEERSQHKNRARAMSWLSAKLNDQQTSAAASAIASERKLLVGSGDRSERIRTYNFPQGRVTDHRVNLTLYSLDEVLAGGVDAVIEPLLAEYQADQLAALGE.

An N5-methylglutamine modification is found at Q237.

This sequence belongs to the prokaryotic/mitochondrial release factor family. Methylated by PrmC. Methylation increases the termination efficiency of RF1.

The protein resides in the cytoplasm. Functionally, peptide chain release factor 1 directs the termination of translation in response to the peptide chain termination codons UAG and UAA. The protein is Peptide chain release factor 1 of Pseudomonas syringae pv. tomato (strain ATCC BAA-871 / DC3000).